Reading from the N-terminus, the 384-residue chain is MSFKNRGDYNFTPRNVVSRNSVFFMCLASFCLGMFFTNRMWNIVPEARGISRLSKLSLSSSDCDKKNVLDYGNNTIGILDKSISNLEMKLVAARAERESLSGKFNISNEAKKRKYFMVIGINTAFSSRKRRDSVRSTWMPQGENLKKLEEEKGIIVRFVIGHSVLSHGILDKAIEAEEKTHGDFLRLEHTEGYMKLSAKTKTFFATAVSLWDAEFYIKVDDDVHVNLASLKKALSAHQNKPRVYVGCMKSGPVLARKSVKYHEPEYWKFGEVGNKYFRHATGQFYAISKDLATYILINQDLLHKYANEDVSLGSWFIGLNVEHVDEKRLCCSTSQDCELKAMMGHVCAASFDWKCSGICRSAERMADVHERCGEPQNALWTSNS.

Residues 21–43 traverse the membrane as a helical; Signal-anchor for type II membrane protein segment; sequence SVFFMCLASFCLGMFFTNRMWNI. N-linked (GlcNAc...) asparagine glycosylation is found at asparagine 73 and asparagine 105.

The protein belongs to the glycosyltransferase 31 family. Mn(2+) is required as a cofactor.

It is found in the golgi apparatus membrane. It participates in protein modification; protein glycosylation. Functionally, beta-1,3-galactosyltransferase that transfers galactose from UDP-galactose to substrates with a terminal glycosyl residue. In Arabidopsis thaliana (Mouse-ear cress), this protein is Probable beta-1,3-galactosyltransferase 1 (B3GALT1).